The following is a 348-amino-acid chain: Structural glycoprotein p40 (348 aa).

This sequence belongs to the baculoviridae gp41 family. In terms of processing, O-glycosylated; contains N-acetylglucosamine side chains.

The protein is Structural glycoprotein p40 (P40) of Bombyx mori nuclear polyhedrosis virus (BmNPV).